Reading from the N-terminus, the 577-residue chain is Laccase-25 (577 aa).

Residues 1 to 22 (MTLHWSLLLFIAIALVSSVAQA) form the signal peptide. Plastocyanin-like domains follow at residues 30–147 (NVGN…PRGG) and 158–313 (KEHV…YAGA). N-linked (GlcNAc...) asparagine glycosylation is present at N33. Cu cation-binding residues include H81 and H83. Residue N109 is glycosylated (N-linked (GlcNAc...) asparagine). Residues H126 and H128 each coordinate Cu cation. Residues N169, N203, N208, N218, N332, N383, N396, N404, N441, and N459 are each glycosylated (N-linked (GlcNAc...) asparagine). The 138-residue stretch at 423–560 (DFPDTPPVVF…AMVLEVLDGP (138 aa)) folds into the Plastocyanin-like 3 domain. Positions 477, 480, 482, 539, 540, 541, and 545 each coordinate Cu cation.

This sequence belongs to the multicopper oxidase family. Cu cation is required as a cofactor.

It is found in the secreted. The protein resides in the extracellular space. Its subcellular location is the apoplast. The catalysed reaction is 4 hydroquinone + O2 = 4 benzosemiquinone + 2 H2O. Lignin degradation and detoxification of lignin-derived products. This is Laccase-25 (LAC25) from Oryza sativa subsp. japonica (Rice).